Here is a 400-residue protein sequence, read N- to C-terminus: Elongation factor Tu (400 aa).

Positions 10–209 (KPHVNIGTIG…AVDKYIPTPQ (200 aa)) constitute a tr-type G domain. A G1 region spans residues 19–26 (GHVDHGKT). 19-26 (GHVDHGKT) is a binding site for GTP. A Mg(2+)-binding site is contributed by threonine 26. Residues 60–64 (GITIN) form a G2 region. The interval 81–84 (DCPG) is G3. GTP contacts are provided by residues 81–85 (DCPGH) and 136–139 (NKVD). A G4 region spans residues 136–139 (NKVD). Positions 174–176 (SAL) are G5.

Belongs to the TRAFAC class translation factor GTPase superfamily. Classic translation factor GTPase family. EF-Tu/EF-1A subfamily. In terms of assembly, monomer.

It localises to the cytoplasm. The enzyme catalyses GTP + H2O = GDP + phosphate + H(+). Functionally, GTP hydrolase that promotes the GTP-dependent binding of aminoacyl-tRNA to the A-site of ribosomes during protein biosynthesis. The sequence is that of Elongation factor Tu from Caldicellulosiruptor bescii (strain ATCC BAA-1888 / DSM 6725 / KCTC 15123 / Z-1320) (Anaerocellum thermophilum).